The following is a 285-amino-acid chain: Tropomyosin alpha-3 chain (285 aa).

A coiled-coil region spans residues 1-285 (MMEAIKKKMQ…DHALNDMTSI (285 aa)). The residue at position 2 (Met-2) is an N-acetylmethionine. Met-2 carries the post-translational modification N-acetylalanine. A compositionally biased stretch (basic and acidic residues) spans 16–41 (KENALDRAEQAEAEQKQAEERSKQLE). The tract at residues 16 to 44 (KENALDRAEQAEAEQKQAEERSKQLEDEL) is disordered. Thr-54 is subject to Phosphothreonine. Phosphoserine occurs at positions 62 and 88. A Phosphothreonine modification is found at Thr-109. 2 positions are modified to N6-acetyllysine: Glu-125 and Leu-177. Ser-207 carries the post-translational modification Phosphoserine. Tyr-215 is subject to N6-acetyllysine. Ser-216 carries the phosphoserine modification. A Phosphothreonine modification is found at Thr-253. Tyr-262 is modified (phosphotyrosine). Residue Ser-272 is modified to Phosphoserine. Residue Thr-283 is modified to Phosphothreonine. Phosphoserine is present on Ser-284.

It belongs to the tropomyosin family. In terms of assembly, homodimer. Heterodimer of an alpha (TPM1, TPM3 or TPM4) and a beta (TPM2) chain. Interacts with TMOD1. Interacts with TNNT1.

It localises to the cytoplasm. Its subcellular location is the cytoskeleton. Functionally, binds to actin filaments in muscle and non-muscle cells. Plays a central role, in association with the troponin complex, in the calcium dependent regulation of vertebrate striated muscle contraction. Smooth muscle contraction is regulated by interaction with caldesmon. In non-muscle cells is implicated in stabilizing cytoskeleton actin filaments. This chain is Tropomyosin alpha-3 chain (TPM3), found in Homo sapiens (Human).